The primary structure comprises 110 residues: Protein YcgL (110 aa).

Residues 14–98 (MFCVIYRSSK…PPEDLLKQHL (85 aa)) form the YcgL domain. The segment at 87–110 (PPPPEDLLKQHLSSVGQNTSPADR) is disordered. Residues 97 to 110 (HLSSVGQNTSPADR) are compositionally biased toward polar residues.

The sequence is that of Protein YcgL from Salmonella choleraesuis (strain SC-B67).